A 96-amino-acid chain; its full sequence is Small ribosomal subunit protein bS6 (96 aa).

This sequence belongs to the bacterial ribosomal protein bS6 family.

Binds together with bS18 to 16S ribosomal RNA. The sequence is that of Small ribosomal subunit protein bS6 from Natranaerobius thermophilus (strain ATCC BAA-1301 / DSM 18059 / JW/NM-WN-LF).